The chain runs to 189 residues: Apolipoprotein D (189 aa).

The N-terminal stretch at 1 to 20 (MATMLLLLATLAGLFTTTEG) is a signal peptide. Position 21 is a pyrrolidone carboxylic acid (Gln21). 2 disulfides stabilise this stretch: Cys28–Cys134 and Cys61–Cys185. Asn65 and Asn98 each carry an N-linked (GlcNAc...) asparagine glycan.

Belongs to the calycin superfamily. Lipocalin family. Homodimer. In terms of tissue distribution, expressed in liver, kidney, bladder, adrenal, cerebrum, duodenum, testis, lung, spleen, pancreas, heart and skin.

It localises to the secreted. Its function is as follows. APOD occurs in the macromolecular complex with lecithin-transport and binding of bilin. Appears to be able to transport a variety of ligands in a number of different contexts. In Rattus norvegicus (Rat), this protein is Apolipoprotein D (Apod).